The sequence spans 321 residues: Lipoyl synthase (321 aa).

[4Fe-4S] cluster-binding residues include Cys68, Cys73, Cys79, Cys94, Cys98, Cys101, and Ser308. Residues 80 to 297 (FNHGTATFMI…KALADELGFT (218 aa)) enclose the Radical SAM core domain.

The protein belongs to the radical SAM superfamily. Lipoyl synthase family. Requires [4Fe-4S] cluster as cofactor.

The protein localises to the cytoplasm. It carries out the reaction [[Fe-S] cluster scaffold protein carrying a second [4Fe-4S](2+) cluster] + N(6)-octanoyl-L-lysyl-[protein] + 2 oxidized [2Fe-2S]-[ferredoxin] + 2 S-adenosyl-L-methionine + 4 H(+) = [[Fe-S] cluster scaffold protein] + N(6)-[(R)-dihydrolipoyl]-L-lysyl-[protein] + 4 Fe(3+) + 2 hydrogen sulfide + 2 5'-deoxyadenosine + 2 L-methionine + 2 reduced [2Fe-2S]-[ferredoxin]. Its pathway is protein modification; protein lipoylation via endogenous pathway; protein N(6)-(lipoyl)lysine from octanoyl-[acyl-carrier-protein]: step 2/2. Its function is as follows. Catalyzes the radical-mediated insertion of two sulfur atoms into the C-6 and C-8 positions of the octanoyl moiety bound to the lipoyl domains of lipoate-dependent enzymes, thereby converting the octanoylated domains into lipoylated derivatives. This chain is Lipoyl synthase, found in Shewanella frigidimarina (strain NCIMB 400).